Here is a 408-residue protein sequence, read N- to C-terminus: tRNA wybutosine-synthesizing protein 2 homolog (408 aa).

Residues Ser-201, Lys-208, Glu-248, and 276–277 (DN) each bind S-adenosyl-L-methionine.

The protein belongs to the class I-like SAM-binding methyltransferase superfamily. TRM5/TYW2 family.

It carries out the reaction 4-demethylwyosine(37) in tRNA(Phe) + S-adenosyl-L-methionine = 4-demethyl-7-[(3S)-3-amino-3-carboxypropyl]wyosine(37) in tRNA(Phe) + S-methyl-5'-thioadenosine + H(+). Its pathway is tRNA modification; wybutosine-tRNA(Phe) biosynthesis. Its function is as follows. S-adenosyl-L-methionine-dependent transferase that acts as a component of the wybutosine biosynthesis pathway. Wybutosine is a hyper modified guanosine with a tricyclic base found at the 3'-position adjacent to the anticodon of eukaryotic phenylalanine tRNA. Catalyzes the transfer of the alpha-amino-alpha-carboxypropyl (acp) group from S-adenosyl-L-methionine to the C-7 position of 4-demethylwyosine (imG-14) to produce wybutosine-86. This is tRNA wybutosine-synthesizing protein 2 homolog (trmt12) from Danio rerio (Zebrafish).